Reading from the N-terminus, the 425-residue chain is Enolase (425 aa).

Residue glutamine 163 participates in (2R)-2-phosphoglycerate binding. Glutamate 205 acts as the Proton donor in catalysis. Positions 242, 285, and 312 each coordinate Mg(2+). The (2R)-2-phosphoglycerate site is built by lysine 337, arginine 366, serine 367, and lysine 388. Catalysis depends on lysine 337, which acts as the Proton acceptor.

The protein belongs to the enolase family. Requires Mg(2+) as cofactor.

The protein localises to the cytoplasm. It is found in the secreted. It localises to the cell surface. It catalyses the reaction (2R)-2-phosphoglycerate = phosphoenolpyruvate + H2O. Its pathway is carbohydrate degradation; glycolysis; pyruvate from D-glyceraldehyde 3-phosphate: step 4/5. Its function is as follows. Catalyzes the reversible conversion of 2-phosphoglycerate (2-PG) into phosphoenolpyruvate (PEP). It is essential for the degradation of carbohydrates via glycolysis. The protein is Enolase of Jannaschia sp. (strain CCS1).